We begin with the raw amino-acid sequence, 545 residues long: Chaperonin GroEL 2 (545 aa).

Residues 29–32 (TLGP), 86–90 (DGTTT), Gly-413, 477–479 (DAA), and Asp-493 each bind ATP. The disordered stretch occupies residues 526–545 (PEPAAAGHGHGHGHQHGPGF). Residues 534–545 (GHGHGHQHGPGF) are compositionally biased toward basic residues.

Belongs to the chaperonin (HSP60) family. As to quaternary structure, forms a cylinder of 14 subunits composed of two heptameric rings stacked back-to-back. Interacts with the co-chaperonin GroES.

It localises to the cytoplasm. The catalysed reaction is ATP + H2O + a folded polypeptide = ADP + phosphate + an unfolded polypeptide.. Its function is as follows. Together with its co-chaperonin GroES, plays an essential role in assisting protein folding. The GroEL-GroES system forms a nano-cage that allows encapsulation of the non-native substrate proteins and provides a physical environment optimized to promote and accelerate protein folding. This chain is Chaperonin GroEL 2, found in Salinispora arenicola (strain CNS-205).